The chain runs to 319 residues: Transmembrane protein 121 (319 aa).

7 helical membrane-spanning segments follow: residues 10-30 (HVCL…AYLV), 43-63 (IIVL…AVWV), 74-94 (YAMI…YFIF), 112-132 (ALTL…VALD), 150-170 (LFWV…LWEP), 174-194 (GLPL…LLVL), and 214-234 (MMLY…LARA). The span at 277-306 (PALSLELQPPPPQRNSVPPPPPPLHGPPGR) shows a compositional bias: pro residues. The tract at residues 277–319 (PALSLELQPPPPQRNSVPPPPPPLHGPPGRPHMSSPTRDPLDT) is disordered.

This sequence belongs to the TMEM121 family. Highly expressed in heart and detected in pancreas, liver and skeletal muscle.

It localises to the membrane. May play a role in MAPK signaling. The polypeptide is Transmembrane protein 121 (TMEM121) (Homo sapiens (Human)).